A 524-amino-acid polypeptide reads, in one-letter code: Na(+)/H(+) antiporter NhaG (524 aa).

11 helical membrane passes run 6-26, 33-53, 59-79, 98-118, 126-146, 169-189, 193-213, 242-262, 283-303, 312-332, and 374-394; these read LHHI…ITAI, PYPI…IPLF, FITE…PALL, VLAL…SSMW, AAFV…LSIF, LAVV…DLGI, GLGL…GGVL, FLLA…AALI, FWDV…GLEI, WGLA…AVYI, and DILV…GLTI.

The protein belongs to the monovalent cation:proton antiporter 1 (CPA1) transporter (TC 2.A.36) family.

Its subcellular location is the cell membrane. Na(+)/H(+) antiporter that extrudes sodium in exchange for external protons. Can also transport lithium. The polypeptide is Na(+)/H(+) antiporter NhaG (nhaG) (Bacillus atrophaeus).